We begin with the raw amino-acid sequence, 459 residues long: Cysteine--tRNA ligase (459 aa).

Cysteine 27 contributes to the Zn(2+) binding site. The 'HIGH' region signature appears at 29 to 39 (ITVYDDCHIGH). The Zn(2+) site is built by cysteine 208, histidine 233, and glutamate 237. The 'KMSKS' region motif lies at 265 to 269 (KMSKS). Lysine 268 provides a ligand contact to ATP.

This sequence belongs to the class-I aminoacyl-tRNA synthetase family. In terms of assembly, monomer. Zn(2+) serves as cofactor.

The protein resides in the cytoplasm. The catalysed reaction is tRNA(Cys) + L-cysteine + ATP = L-cysteinyl-tRNA(Cys) + AMP + diphosphate. In Francisella philomiragia subsp. philomiragia (strain ATCC 25017 / CCUG 19701 / FSC 153 / O#319-036), this protein is Cysteine--tRNA ligase.